The chain runs to 369 residues: Histidinol-phosphate aminotransferase 2 (369 aa).

An N6-(pyridoxal phosphate)lysine modification is found at Lys-229.

The protein belongs to the class-II pyridoxal-phosphate-dependent aminotransferase family. Histidinol-phosphate aminotransferase subfamily. Homodimer. Pyridoxal 5'-phosphate serves as cofactor.

It carries out the reaction L-histidinol phosphate + 2-oxoglutarate = 3-(imidazol-4-yl)-2-oxopropyl phosphate + L-glutamate. Its pathway is amino-acid biosynthesis; L-histidine biosynthesis; L-histidine from 5-phospho-alpha-D-ribose 1-diphosphate: step 7/9. This Pseudomonas aeruginosa (strain ATCC 15692 / DSM 22644 / CIP 104116 / JCM 14847 / LMG 12228 / 1C / PRS 101 / PAO1) protein is Histidinol-phosphate aminotransferase 2 (hisC2).